The chain runs to 270 residues: Checkpoint signal transducer rad24 (270 aa).

A phosphoserine mark is found at serine 34 and serine 66. Residues 242–270 (AAAGGNTEGAQENAPSNAPEGEAEPKADA) are disordered.

It belongs to the 14-3-3 family. In terms of assembly, homodimer. Binds preferentially to mei2 phosphorylated by ran1/pat1. Binds preferentially to cdc25 phosphorylated by srk1 during G2; the interaction is increased during osmotic stress. Interacts with byr2. Interacts with rad25.

Its subcellular location is the cytoplasm. Acts in cell cycle and stress checkpoint signaling by sequestering signal transducers regulated by the checkpoints. Required for the DNA damage checkpoint that ensures that DNA damage is repaired before mitosis is attempted. During environmental stress, sequesters srk1-phosphorylated cdc25 in the cytoplasm to delay the G2/M transition. Sequesters byr2 in the cytoplasm to prevent its translocation to the plasma membrane. Sequesters ran1/pat1-phosphorylated mei2 from its non-coding RNA activators (including meiRNA), to prevent meiotic induction in vegetative cells and to regulate meiosis I. The chain is Checkpoint signal transducer rad24 from Schizosaccharomyces pombe (strain 972 / ATCC 24843) (Fission yeast).